We begin with the raw amino-acid sequence, 432 residues long: 3-phosphoshikimate 1-carboxyvinyltransferase (432 aa).

3-phosphoshikimate-binding residues include lysine 23, serine 24, and arginine 28. A phosphoenolpyruvate-binding site is contributed by lysine 23. Glycine 95 and arginine 123 together coordinate phosphoenolpyruvate. The 3-phosphoshikimate site is built by serine 167, glutamine 169, aspartate 316, and lysine 343. Residue glutamine 169 participates in phosphoenolpyruvate binding. Aspartate 316 (proton acceptor) is an active-site residue. Residues arginine 347 and arginine 391 each coordinate phosphoenolpyruvate.

It belongs to the EPSP synthase family. As to quaternary structure, monomer.

The protein resides in the cytoplasm. It catalyses the reaction 3-phosphoshikimate + phosphoenolpyruvate = 5-O-(1-carboxyvinyl)-3-phosphoshikimate + phosphate. Its pathway is metabolic intermediate biosynthesis; chorismate biosynthesis; chorismate from D-erythrose 4-phosphate and phosphoenolpyruvate: step 6/7. Catalyzes the transfer of the enolpyruvyl moiety of phosphoenolpyruvate (PEP) to the 5-hydroxyl of shikimate-3-phosphate (S3P) to produce enolpyruvyl shikimate-3-phosphate and inorganic phosphate. In Limosilactobacillus fermentum (strain NBRC 3956 / LMG 18251) (Lactobacillus fermentum), this protein is 3-phosphoshikimate 1-carboxyvinyltransferase.